A 125-amino-acid polypeptide reads, in one-letter code: MPTIQQLIRTERQHLTRKTKSPALRACPERRGVCTRVYTSTPKKPNSALRKVARVRLTSGFEVTAYIPGIGHNLQEHSVVLIRGGRVKDLPGVRYHIIRGTLDTAGVKDRSQSRSKYGAKASKQD.

Aspartate 89 carries the 3-methylthioaspartic acid modification. The tract at residues 104–125 (TAGVKDRSQSRSKYGAKASKQD) is disordered.

It belongs to the universal ribosomal protein uS12 family. In terms of assembly, part of the 30S ribosomal subunit. Contacts proteins S8 and S17. May interact with IF1 in the 30S initiation complex.

Its function is as follows. With S4 and S5 plays an important role in translational accuracy. Functionally, interacts with and stabilizes bases of the 16S rRNA that are involved in tRNA selection in the A site and with the mRNA backbone. Located at the interface of the 30S and 50S subunits, it traverses the body of the 30S subunit contacting proteins on the other side and probably holding the rRNA structure together. The combined cluster of proteins S8, S12 and S17 appears to hold together the shoulder and platform of the 30S subunit. The sequence is that of Small ribosomal subunit protein uS12 from Prochlorococcus marinus (strain MIT 9303).